A 186-amino-acid chain; its full sequence is ATP synthase subunit delta (186 aa).

The protein belongs to the ATPase delta chain family. As to quaternary structure, F-type ATPases have 2 components, F(1) - the catalytic core - and F(0) - the membrane proton channel. F(1) has five subunits: alpha(3), beta(3), gamma(1), delta(1), epsilon(1). CF(0) has four main subunits: a(1), b(1), b'(1) and c(10-14). The alpha and beta chains form an alternating ring which encloses part of the gamma chain. F(1) is attached to F(0) by a central stalk formed by the gamma and epsilon chains, while a peripheral stalk is formed by the delta, b and b' chains.

Its subcellular location is the cell inner membrane. F(1)F(0) ATP synthase produces ATP from ADP in the presence of a proton or sodium gradient. F-type ATPases consist of two structural domains, F(1) containing the extramembraneous catalytic core and F(0) containing the membrane proton channel, linked together by a central stalk and a peripheral stalk. During catalysis, ATP synthesis in the catalytic domain of F(1) is coupled via a rotary mechanism of the central stalk subunits to proton translocation. Its function is as follows. This protein is part of the stalk that links CF(0) to CF(1). It either transmits conformational changes from CF(0) to CF(1) or is implicated in proton conduction. This is ATP synthase subunit delta from Jannaschia sp. (strain CCS1).